A 1008-amino-acid polypeptide reads, in one-letter code: Collagen alpha-2(I) chain (1008 aa).

Residues 1-999 form a disordered region; that stretch reads GGFDFSFLPQ…IRGSGGGYDF (999 aa). 4-hydroxyproline occurs at positions 9, 12, 45, and 51. The span at 38-81 shows a compositional bias: low complexity; it reads LMGPRGPPGASGAPGPQGFPAGEPGEPGQTGPAGARGPAGPPGK. The span at 82 to 94 shows a compositional bias: basic and acidic residues; it reads ADGHPGKPGRPGE. 5-hydroxylysine; alternate is present on lysine 116. The O-linked (Gal...) hydroxylysine; alternate glycan is linked to lysine 116. Low complexity-rich tracts occupy residues 164–193, 239–260, and 301–314; these read VGAPGPAGARGSDGSVGPVGPAGPIGSAGP, PGANGLTGAKGAAGLPGVAGAP, and EPGSAGPQGPPGSS. Residues 336 to 345 show a composition bias toward gly residues; sequence GLRGGPGSRG. Residues 358–374 show a composition bias toward low complexity; sequence PAGARGASGPAGVRGPS. Proline 380 and proline 383 each carry 4-hydroxyproline. The span at 409-428 shows a compositional bias: low complexity; sequence LPGIDGRPGPIGPAGARGEA. Positions 455-466 are enriched in gly residues; it reads GNRGQGGKGEQG. 2 stretches are compositionally biased toward low complexity: residues 513–530 and 542–552; these read PGESGAVGPSGAIGSRGP and EPGVVGAPGTA. Positions 553-562 are enriched in gly residues; it reads GPAGSGGLPG. 2 stretches are compositionally biased toward low complexity: residues 582 to 629 and 636 to 656; these read RGEV…PRGS and VGPAGPNGFAGPAGAAGQPGA. Basic and acidic residues predominate over residues 657-666; it reads KGERGTKGPK. Low complexity predominate over residues 674–684; sequence PTGPVGSAGPA. The span at 694–703 shows a compositional bias: gly residues; it reads GSRGDGGPPG. Over residues 704–714 the composition is skewed to low complexity; sequence ATGFPGAAGRT. The segment covering 751–760 has biased composition (gly residues); sequence GETGAGGPPG. Low complexity-rich tracts occupy residues 768 to 795, 803 to 813, 826 to 842, 862 to 884, and 892 to 907; these read SGEPGTAGPPGTAGPQGLLGAPGILGLP, LPGVAGAVGEP, PPGAVGSPGVNGAPGNP, YAGNAGPVGAAGAPGPHGTVGPA, and EPGPVGSVGPVGALGP. Over residues 917-928 the composition is skewed to basic and acidic residues; the sequence is RGDKGEPGDKGP. Gly residues predominate over residues 989-998; that stretch reads GIRGSGGGYD.

Belongs to the fibrillar collagen family. Trimers of one alpha 2(I) and two alpha 1(I) chains. Interacts (via C-terminus) with TMEM131 (via PapD-L domain); the interaction is direct and is involved in assembly and TRAPPIII ER-to-Golgi transport complex-dependent secretion of collagen. In terms of processing, prolines at the third position of the tripeptide repeating unit (G-X-Y) are hydroxylated in some or all of the chains. In terms of tissue distribution, expressed in bones.

The protein localises to the secreted. It is found in the extracellular space. The protein resides in the extracellular matrix. Type I collagen is a member of group I collagen (fibrillar forming collagen). This is Collagen alpha-2(I) chain from Nothrotheriops shastensis (Shasta ground sloth).